Consider the following 302-residue polypeptide: Ornithine carbamoyltransferase (302 aa).

Residues 53–56, Gln80, Arg104, and 131–134 contribute to the carbamoyl phosphate site; these read STRT and HPCQ. L-ornithine is bound by residues Asn162, Asp219, and 223-224; that span reads SM. Carbamoyl phosphate is bound by residues 259–260 and Arg287; that span reads CL.

This sequence belongs to the aspartate/ornithine carbamoyltransferase superfamily. OTCase family.

Its subcellular location is the cytoplasm. It catalyses the reaction carbamoyl phosphate + L-ornithine = L-citrulline + phosphate + H(+). The protein operates within amino-acid biosynthesis; L-arginine biosynthesis; L-arginine from L-ornithine and carbamoyl phosphate: step 1/3. Its function is as follows. Reversibly catalyzes the transfer of the carbamoyl group from carbamoyl phosphate (CP) to the N(epsilon) atom of ornithine (ORN) to produce L-citrulline. The protein is Ornithine carbamoyltransferase of Hydrogenovibrio crunogenus (strain DSM 25203 / XCL-2) (Thiomicrospira crunogena).